The following is a 168-amino-acid chain: S-ribosylhomocysteine lyase (168 aa).

Residues histidine 54, histidine 58, and cysteine 128 each contribute to the Fe cation site.

This sequence belongs to the LuxS family. As to quaternary structure, homodimer. The cofactor is Fe cation.

The enzyme catalyses S-(5-deoxy-D-ribos-5-yl)-L-homocysteine = (S)-4,5-dihydroxypentane-2,3-dione + L-homocysteine. In terms of biological role, involved in the synthesis of autoinducer 2 (AI-2) which is secreted by bacteria and is used to communicate both the cell density and the metabolic potential of the environment. The regulation of gene expression in response to changes in cell density is called quorum sensing. Catalyzes the transformation of S-ribosylhomocysteine (RHC) to homocysteine (HC) and 4,5-dihydroxy-2,3-pentadione (DPD). The protein is S-ribosylhomocysteine lyase of Actinobacillus succinogenes (strain ATCC 55618 / DSM 22257 / CCUG 43843 / 130Z).